A 102-amino-acid chain; its full sequence is Caroteno-chlorophyll a-c-binding protein (102 aa).

Chlorophyll a-binding residues include E36 and H39. The chain crosses the membrane as a helical span at residues 78-98 (VLGLIKIVPAGLWGIMIFYAA).

It belongs to the light-harvesting chlorophyll a/b-binding (LHC) protein family. The LHC complex consists of chlorophyll a-b binding proteins. Requires Binds at least 14 chlorophylls (8 Chl-a and 6 Chl-b) and carotenoids such as lutein and neoxanthin. as cofactor. Post-translationally, photoregulated by reversible phosphorylation of its threonine residues.

It localises to the plastid. Its subcellular location is the chloroplast thylakoid membrane. In terms of biological role, the light-harvesting complex (LHC) functions as a light receptor, it captures and delivers excitation energy to photosystems with which it is closely associated. The sequence is that of Caroteno-chlorophyll a-c-binding protein from Amphidinium carterae (Dinoflagellate).